Reading from the N-terminus, the 89-residue chain is UPF0223 protein BcerKBAB4_3787 (89 aa).

It belongs to the UPF0223 family.

The protein is UPF0223 protein BcerKBAB4_3787 of Bacillus mycoides (strain KBAB4) (Bacillus weihenstephanensis).